The sequence spans 648 residues: Serine/threonine-protein kinase DCLK3 (648 aa).

Disordered stretches follow at residues 86–127 and 150–345; these read DDRA…HLGV and QSLE…PRPM. 5 stretches are compositionally biased toward basic and acidic residues: residues 98-127, 213-234, 255-266, 277-303, and 312-338; these read GKWEPEPSSKPPREATLEERHARGEKHLGV, ELRRPSKSMDKKEDRGPEDQES, EGLREVKKDTRP, LREHQAGFEKLRRTRGEEKEAEKEKKP, and TLRDDQPAKLEKEPKTRPEENKPERPS. The 258-residue stretch at 356-613 folds into the Protein kinase domain; that stretch reads YETGRVIGDG…AHQVLQHPWI (258 aa). ATP-binding positions include 362–370 and lysine 385; that span reads IGDGNFAVV. Aspartate 477 (proton acceptor) is an active-site residue. The disordered stretch occupies residues 628–648; sequence VSPSSEGHFRSQHKRVVEQVS.

Belongs to the protein kinase superfamily. CAMK Ser/Thr protein kinase family. CaMK subfamily.

Its subcellular location is the cytoplasm. It localises to the nucleus. The enzyme catalyses L-seryl-[protein] + ATP = O-phospho-L-seryl-[protein] + ADP + H(+). The catalysed reaction is L-threonyl-[protein] + ATP = O-phospho-L-threonyl-[protein] + ADP + H(+). This chain is Serine/threonine-protein kinase DCLK3 (DCLK3), found in Homo sapiens (Human).